The chain runs to 100 residues: Large ribosomal subunit protein bL21 (100 aa).

Belongs to the bacterial ribosomal protein bL21 family. Part of the 50S ribosomal subunit. Contacts protein L20.

Functionally, this protein binds to 23S rRNA in the presence of protein L20. This Wolbachia pipientis subsp. Culex pipiens (strain wPip) protein is Large ribosomal subunit protein bL21.